Reading from the N-terminus, the 359-residue chain is UDP-3-O-acylglucosamine N-acyltransferase (359 aa).

The active-site Proton acceptor is His253.

It belongs to the transferase hexapeptide repeat family. LpxD subfamily. Homotrimer.

It catalyses the reaction a UDP-3-O-[(3R)-3-hydroxyacyl]-alpha-D-glucosamine + a (3R)-hydroxyacyl-[ACP] = a UDP-2-N,3-O-bis[(3R)-3-hydroxyacyl]-alpha-D-glucosamine + holo-[ACP] + H(+). It functions in the pathway bacterial outer membrane biogenesis; LPS lipid A biosynthesis. In terms of biological role, catalyzes the N-acylation of UDP-3-O-acylglucosamine using 3-hydroxyacyl-ACP as the acyl donor. Is involved in the biosynthesis of lipid A, a phosphorylated glycolipid that anchors the lipopolysaccharide to the outer membrane of the cell. The protein is UDP-3-O-acylglucosamine N-acyltransferase of Burkholderia cenocepacia (strain ATCC BAA-245 / DSM 16553 / LMG 16656 / NCTC 13227 / J2315 / CF5610) (Burkholderia cepacia (strain J2315)).